A 231-amino-acid polypeptide reads, in one-letter code: Ribonuclease 3 (231 aa).

The region spanning methionine 3–threonine 130 is the RNase III domain. Position 43 (glutamate 43) interacts with Mg(2+). Aspartate 47 is a catalytic residue. Mg(2+) is bound by residues aspartate 116 and glutamate 119. Glutamate 119 is an active-site residue. Positions aspartate 157–lysine 228 constitute a DRBM domain.

It belongs to the ribonuclease III family. As to quaternary structure, homodimer. The cofactor is Mg(2+).

The protein resides in the cytoplasm. It carries out the reaction Endonucleolytic cleavage to 5'-phosphomonoester.. In terms of biological role, digests double-stranded RNA. Involved in the processing of primary rRNA transcript to yield the immediate precursors to the large and small rRNAs (23S and 16S). Processes some mRNAs, and tRNAs when they are encoded in the rRNA operon. Processes pre-crRNA and tracrRNA of type II CRISPR loci if present in the organism. The sequence is that of Ribonuclease 3 from Mesoplasma florum (strain ATCC 33453 / NBRC 100688 / NCTC 11704 / L1) (Acholeplasma florum).